A 1653-amino-acid polypeptide reads, in one-letter code: Clathrin heavy chain (1653 aa).

A globular terminal domain region spans residues 1–483 (MSDLPIEFTE…FDTTLALACY (483 aa)). 7 WD40-like repeat regions span residues 23–66 (FLDF…KNMG), 67–107 (GDSA…LDEP), 108–152 (VIFW…ANLN), 153–198 (NTQI…QAID), 199–263 (GHVA…PDAT), 264–307 (NDFP…ITAE), and 308–336 (SVFTAAPYNHENGIACINKKGQVLAVEIS). Residues 453–469 (EKWLKEDKLECSEELGD) are binding site for the uncoating ATPase, involved in lattice disassembly. The tract at residues 484–527 (LRAGAHAKVISCLAELQQFEKIIPYCQKVGYQPNFLVLISSLIR) is flexible linker. The segment at 528–1653 (SSPDRASEFA…SAMNVQPTGF (1126 aa)) is heavy chain arm. CHCR repeat units lie at residues 543–689 (NPET…QTVV), 692–834 (ATKF…DEAF), 839–978 (LQSV…QLID), 985–1130 (IPEL…IPDA), 1134–1275 (YIKA…FKLA), 1280–1426 (LNLI…SLLV), and 1429–1572 (LTSL…REGF). A Glycyl lysine isopeptide (Lys-Gly) (interchain with G-Cter in ubiquitin) cross-link involves residue Lys-1107. Residues 1219-1528 (AARLCYSAVS…LLYRRNKKWA (310 aa)) are involved in binding clathrin light chain.

This sequence belongs to the clathrin heavy chain family. Clathrin triskelions, composed of 3 heavy chains and 3 light chains, are the basic subunits of the clathrin coat. Interacts with the auxilin-like clathrin uncoating factor SWA2. Interacts with INP53.

It is found in the cytoplasmic vesicle membrane. The protein resides in the membrane. It localises to the coated pit. Clathrin is the major protein of the polyhedral coat of coated pits and vesicles. In yeast, it is involved in the retention of proteins in an intracellular membrane compartment, presumably the trans-Golgi. This is Clathrin heavy chain (CHC1) from Saccharomyces cerevisiae (strain ATCC 204508 / S288c) (Baker's yeast).